Here is a 329-residue protein sequence, read N- to C-terminus: Ferredoxin--NAD(P)(+) reductase CarAd (329 aa).

The 2Fe-2S ferredoxin-type domain maps to 2-92 (YQLKIEGQAP…DLRIKVAVQD (91 aa)). [2Fe-2S] cluster is bound by residues Cys35, Cys40, Cys43, and Cys76. One can recognise an FAD-binding FR-type domain in the interval 100–200 (ISRMEAEVVE…TGPMGTSFFR (101 aa)).

In terms of assembly, monomer. Carbazole 1,9a-dioxygenase complex consists of a terminal oxygenase component CarAa, a ferredoxin reductase component CarAd and a ferredoxin component CarAc. The cofactor is [2Fe-2S] cluster. It depends on FAD as a cofactor.

The enzyme catalyses 2 reduced [2Fe-2S]-[ferredoxin] + NAD(+) + H(+) = 2 oxidized [2Fe-2S]-[ferredoxin] + NADH. It carries out the reaction 2 reduced [2Fe-2S]-[ferredoxin] + NADP(+) + H(+) = 2 oxidized [2Fe-2S]-[ferredoxin] + NADPH. Its function is as follows. Part of the multicomponent carbazole 1,9a-dioxygenase (CARDO), that converts carbazole (CAR) into 2-aminobiphenyl-2,3-diol. It can use both NAD and NADP as electron donors, but NAD is supposed to be the physiological electron donor. This chain is Ferredoxin--NAD(P)(+) reductase CarAd (carAd), found in Metapseudomonas resinovorans (Pseudomonas resinovorans).